Reading from the N-terminus, the 185-residue chain is uncharacterized protein (185 aa).

The next 3 membrane-spanning stretches (helical) occupy residues 32-52 (LIFVPDSPTATFFFLFVLLAF), 66-86 (LVTLVKYGLWAVAMNFLVLAV), and 155-175 (IGYGTFWLSIFSIALAYFLVV).

It localises to the cell membrane. This is an uncharacterized protein from Bacillus subtilis (strain 168).